A 541-amino-acid polypeptide reads, in one-letter code: Eukaryotic translation initiation factor 3 subunit L (541 aa).

Positions T308 to H516 constitute a PCI domain.

This sequence belongs to the eIF-3 subunit L family. As to quaternary structure, component of the eukaryotic translation initiation factor 3 (eIF-3) complex. The eIF-3 complex interacts with pix.

The protein localises to the cytoplasm. Functionally, component of the eukaryotic translation initiation factor 3 (eIF-3) complex, which is involved in protein synthesis of a specialized repertoire of mRNAs and, together with other initiation factors, stimulates binding of mRNA and methionyl-tRNAi to the 40S ribosome. The eIF-3 complex specifically targets and initiates translation of a subset of mRNAs involved in cell proliferation. The protein is Eukaryotic translation initiation factor 3 subunit L of Drosophila pseudoobscura pseudoobscura (Fruit fly).